A 1066-amino-acid polypeptide reads, in one-letter code: Ankyrin repeat protein nuc-2 (1066 aa).

The SPX domain occupies 1–166 (MKFGKQIQKR…KSKTKELYLS (166 aa)). 7 ANK repeats span residues 268-298 (RVTRTFLASINEGSLEALKVLLDTGLVDIQS), 336-366 (YGRVPLHYASMHGRLDMIDALLNASPKTINL), 370-399 (DNFTPLVHSIVRNHLECVGRLLERSARIDP), 403-432 (TDHVPLNLACQHGSVAIVELLLKHGAKILA), 435-465 (EGLYPQHLVARSGQTPEILVLLKQYGADLDQ), 470-499 (YGWTPLVHAASEGNVPCLQALLETGADPNI), and 503-532 (KDLPAMYYAAWEGHLECMKLLTPAKKEKAA). The GP-PDE domain maps to 717–1048 (ITDFETYWKA…DPFPKLPKGV (332 aa)). The segment at 923-963 (KQQQQGSCSKGDGDEDMGGTTAASRREAADERTLQSDGRRT) is disordered. Residues 946–962 (SRREAADERTLQSDGRR) are compositionally biased toward basic and acidic residues.

Its function is as follows. Controls phosphorus acquisition. This chain is Ankyrin repeat protein nuc-2 (nuc-2), found in Neurospora crassa (strain ATCC 24698 / 74-OR23-1A / CBS 708.71 / DSM 1257 / FGSC 987).